A 296-amino-acid polypeptide reads, in one-letter code: Cleavage and polyadenylation specificity factor subunit 4 (296 aa).

5 consecutive C3H1-type zinc fingers follow at residues 35 to 63 (KSIA…RHIR), 64 to 91 (GDRT…HEYD), 92 to 119 (MTKM…HIDP), 120 to 147 (QSKV…HLRR), and 149 to 171 (LCMD…HPHF). The CCHC-type 1 zinc-finger motif lies at 189–206 (PTCHYCGELGHKANSCKQ). The tract at residues 222–254 (HSGGHSGGYSGHSGHIEGADDMQSNHHSQPHGP) is disordered. The CCHC-type 2 zinc-finger motif lies at 266–283 (ITCYKCGNKGHYANKCPK).

Component of the cleavage and polyadenylation specificity factor (CPSF) complex, composed of at least Clp, Cpsf73, Cpsf100 and Cpsf160. In terms of tissue distribution, during oogenesis, expression is detected in the germarium, in nurse cells, in the oocyte, and in the somatically derived follicular epithelial cells (at protein level). At oogenesis stage 12, nurse cells degenerate and their content is transferred into the oocyte. In larvae, expressed in all organs and disks (at protein level). In the larval salivary gland, expression is initially confined to cells at the anterior end but later expands throughout the entire gland (at protein level).

It localises to the nucleus. Its function is as follows. Component of the cleavage and polyadenylation specificity factor (CPSF) complex that plays a key role in pre-mRNA 3'-end formation, recognizing the AAUAAA signal sequence and interacting with poly(A) polymerase and other factors to bring about cleavage and poly(A) addition. Has endonuclease activity. Binds RNA polymers with a preference for G- and/or C-rich clusters. Binds single-stranded DNA non-specifically. The protein is Cleavage and polyadenylation specificity factor subunit 4 (Clp) of Drosophila melanogaster (Fruit fly).